Here is a 293-residue protein sequence, read N- to C-terminus: 4-diphosphocytidyl-2-C-methyl-D-erythritol kinase (293 aa).

Residue K16 is part of the active site. 99–109 (PMGAGLGGGSS) contributes to the ATP binding site. Residue D141 is part of the active site.

The protein belongs to the GHMP kinase family. IspE subfamily.

It catalyses the reaction 4-CDP-2-C-methyl-D-erythritol + ATP = 4-CDP-2-C-methyl-D-erythritol 2-phosphate + ADP + H(+). It functions in the pathway isoprenoid biosynthesis; isopentenyl diphosphate biosynthesis via DXP pathway; isopentenyl diphosphate from 1-deoxy-D-xylulose 5-phosphate: step 3/6. Functionally, catalyzes the phosphorylation of the position 2 hydroxy group of 4-diphosphocytidyl-2C-methyl-D-erythritol. The chain is 4-diphosphocytidyl-2-C-methyl-D-erythritol kinase from Burkholderia ambifaria (strain MC40-6).